The primary structure comprises 568 residues: Light-independent protochlorophyllide reductase subunit B (568 aa).

A [4Fe-4S] cluster-binding site is contributed by D36. The Proton donor role is filled by D293. G437–M438 is a substrate binding site. Positions A476–P517 are disordered. Residues S498–V515 show a composition bias toward polar residues.

It belongs to the ChlB/BchB/BchZ family. Protochlorophyllide reductase is composed of three subunits; BchL, BchN and BchB. Forms a heterotetramer of two BchB and two BchN subunits. The cofactor is [4Fe-4S] cluster.

The catalysed reaction is chlorophyllide a + oxidized 2[4Fe-4S]-[ferredoxin] + 2 ADP + 2 phosphate = protochlorophyllide a + reduced 2[4Fe-4S]-[ferredoxin] + 2 ATP + 2 H2O. Its pathway is porphyrin-containing compound metabolism; bacteriochlorophyll biosynthesis (light-independent). Component of the dark-operative protochlorophyllide reductase (DPOR) that uses Mg-ATP and reduced ferredoxin to reduce ring D of protochlorophyllide (Pchlide) to form chlorophyllide a (Chlide). This reaction is light-independent. The NB-protein (BchN-BchB) is the catalytic component of the complex. This chain is Light-independent protochlorophyllide reductase subunit B, found in Roseiflexus sp. (strain RS-1).